A 331-amino-acid chain; its full sequence is UDP-GalNAc:beta-1,3-N-acetylgalactosaminyltransferase 1 (331 aa).

Over M1 to W20 the chain is Cytoplasmic. The chain crosses the membrane as a helical; Signal-anchor for type II membrane protein span at residues S21–V43. At I44–Y331 the chain is on the lumenal side. N72, N154, N198, N212, and N326 each carry an N-linked (GlcNAc...) asparagine glycan.

The protein belongs to the glycosyltransferase 31 family. Mg(2+) serves as cofactor. As to expression, detected in brain, ovary, kidney, uterus and stomach. In ovary, specifically expressed in follicular granulosa cells and shows particularly strong expression at later stages of follicle development.

It is found in the golgi apparatus membrane. The catalysed reaction is a globoside Gb3Cer (d18:1(4E)) + UDP-N-acetyl-alpha-D-galactosamine = a globoside Gb4Cer (d18:1(4E)) + UDP + H(+). It participates in protein modification; protein glycosylation. Functionally, transfers N-acetylgalactosamine onto globotriaosylceramide. Plays a critical role in preimplantation stage embryonic development. The chain is UDP-GalNAc:beta-1,3-N-acetylgalactosaminyltransferase 1 from Mus musculus (Mouse).